The primary structure comprises 991 residues: MSSNTVAQFATELKMPANVLLEQLRSAGVDLNSVDDAVTDSDKAKLLDSLRRAHGATEGKKITLTRRQTSEIRQADATGRSRTIQVEVRKKRVFVKRDPSEIALEQARADAAASDAAPAEPAPAAAEPSASAPVTAPVNAPAADAPQAPATAAPDTAAPAAETPSQPPAVEPQPAPVAQAEPEPQPEPVAKPAEAPAEPAAPAAVEAHAEREAEQAPPEPAVQAEIETAPAPAAESAQAARPEPVTPKAEPAPAASKPARAEGRRGAPVPVAAPAVDSAGREEARRAAEAEAAALREMLNRPRKVLRAPEPEAGALSGTLHKPAGKAAAPGAKKDAKPGAGGSKKTIKTAEVASTWSDDASRKKPADTKSAAPSRDGWRAGGKGGKGGRNSRNQQAERRHEPAPQEFIAREVHVPETISVADLAHKMSVKAAEVIKQLMKLGQMVTINQVLDQETAMIVVEELGHVAIAAKLDDPEAFLDETPVASEAEALPRAPVVTVMGHVDHGKTSLLDYIRRAKVASGEAGGITQHIGAYHVETARGVVTFLDTPGHEAFTAMRARGAKATDIVILVVAADDGVMPQTREAIHHAKAGGVPLVVAVNKIDKPEANPERVKQELVAEEVVPEEYGGDVPFVPVSAKTGAGIDDLLENVLLQAEILELTAPVEAPAKGLVIEARLDKGRGPVATILVQSGTLKRGDVVLAGASFGRVRAMVDENGKQIQEAGPSIPVEIQGLTEVPAAGDELIALADERKAREIALFRQGKFRDVKLARQQAAKLESMFDNLGEGTQTLPLIVKTDVQGSQEALVASLTKLSTDEVRVQVVHAAVGGISESDINLAIASNAVVIGFNVRAEQSAKKLAESNGIDVRYYNIIYDAVDEVKAAMSGMLAPEKKEEVIGLVEVREVYSISRIGNVAGCMVLDGLVRRDSQIRLLRNNVVHWTGHLDSLRRFKDDVKEVKSGFDCGLTLRGSNDIQVGDQLEVFEIKEIARTL.

2 disordered regions span residues 58–82 and 106–405; these read EGKK…GRSR and QARA…PAPQ. The span at 106-164 shows a compositional bias: low complexity; sequence QARADAAASDAAPAEPAPAAAEPSASAPVTAPVNAPAADAPQAPATAAPDTAAPAAETP. The span at 165–175 shows a compositional bias: pro residues; sequence SQPPAVEPQPA. 3 stretches are compositionally biased toward low complexity: residues 190–206, 221–258, and 267–276; these read AKPA…AAVE, AVQA…ASKP, and APVPVAAPAV. The span at 279 to 289 shows a compositional bias: basic and acidic residues; sequence AGREEARRAAE. Positions 379–388 are enriched in gly residues; it reads RAGGKGGKGG. The segment covering 395–405 has biased composition (basic and acidic residues); that stretch reads QAERRHEPAPQ. The tr-type G domain occupies 492–659; sequence PRAPVVTVMG…NVLLQAEILE (168 aa). The interval 501 to 508 is G1; the sequence is GHVDHGKT. Residue 501-508 participates in GTP binding; sequence GHVDHGKT. The G2 stretch occupies residues 526–530; sequence GITQH. Positions 547–550 are G3; the sequence is DTPG. Residues 547-551 and 601-604 each bind GTP; these read DTPGH and NKID. The tract at residues 601 to 604 is G4; the sequence is NKID. The interval 637–639 is G5; it reads SAK.

This sequence belongs to the TRAFAC class translation factor GTPase superfamily. Classic translation factor GTPase family. IF-2 subfamily.

The protein localises to the cytoplasm. In terms of biological role, one of the essential components for the initiation of protein synthesis. Protects formylmethionyl-tRNA from spontaneous hydrolysis and promotes its binding to the 30S ribosomal subunits. Also involved in the hydrolysis of GTP during the formation of the 70S ribosomal complex. This Bordetella petrii (strain ATCC BAA-461 / DSM 12804 / CCUG 43448) protein is Translation initiation factor IF-2.